Reading from the N-terminus, the 141-residue chain is Nucleoside diphosphate kinase (141 aa).

ATP is bound by residues Lys11, Phe59, Arg87, Thr93, Arg104, and Asn114. The active-site Pros-phosphohistidine intermediate is the His117.

Belongs to the NDK family. Homotetramer. It depends on Mg(2+) as a cofactor.

It localises to the cytoplasm. The enzyme catalyses a 2'-deoxyribonucleoside 5'-diphosphate + ATP = a 2'-deoxyribonucleoside 5'-triphosphate + ADP. The catalysed reaction is a ribonucleoside 5'-diphosphate + ATP = a ribonucleoside 5'-triphosphate + ADP. Major role in the synthesis of nucleoside triphosphates other than ATP. The ATP gamma phosphate is transferred to the NDP beta phosphate via a ping-pong mechanism, using a phosphorylated active-site intermediate. This chain is Nucleoside diphosphate kinase, found in Nitrosospira multiformis (strain ATCC 25196 / NCIMB 11849 / C 71).